Here is a 398-residue protein sequence, read N- to C-terminus: Dual specificity mitogen-activated protein kinase kinase 2 (398 aa).

A disordered region spans residues 1–29 (MPAKRKPVLPALTITPSPAEGPGPGGSAE). The Protein kinase domain maps to 70–367 (FERISELGAG…LKMLMNHTFI (298 aa)). ATP-binding positions include 76–84 (LGAGNGGVV) and lysine 99. Residue aspartate 192 is the Proton acceptor of the active site. Phosphoserine; by RAF occurs at positions 220 and 224.

The protein belongs to the protein kinase superfamily. STE Ser/Thr protein kinase family. MAP kinase kinase subfamily. Post-translationally, activated by phosphorylation on Ser/Thr catalyzed by MAP kinase kinase kinases (RAF).

It catalyses the reaction L-seryl-[protein] + ATP = O-phospho-L-seryl-[protein] + ADP + H(+). The catalysed reaction is L-threonyl-[protein] + ATP = O-phospho-L-threonyl-[protein] + ADP + H(+). It carries out the reaction L-tyrosyl-[protein] + ATP = O-phospho-L-tyrosyl-[protein] + ADP + H(+). In terms of biological role, catalyzes the concomitant phosphorylation of a threonine and a tyrosine residue in a Thr-Glu-Tyr sequence located in MAP kinases. Activates the ERK1 and ERK2 MAP kinases. The chain is Dual specificity mitogen-activated protein kinase kinase 2 (MAP2K2) from Gallus gallus (Chicken).